The primary structure comprises 487 residues: Malonate-semialdehyde dehydrogenase 2 (487 aa).

The NAD(+) site is built by Phe154, Lys178, Glu181, Arg182, and Ser231. Cys286 functions as the Nucleophile in the catalytic mechanism. Residue Glu386 coordinates NAD(+).

The protein belongs to the aldehyde dehydrogenase family. IolA subfamily. As to quaternary structure, homotetramer.

The catalysed reaction is 3-oxopropanoate + NAD(+) + CoA + H2O = hydrogencarbonate + acetyl-CoA + NADH + H(+). It carries out the reaction 2-methyl-3-oxopropanoate + NAD(+) + CoA + H2O = propanoyl-CoA + hydrogencarbonate + NADH + H(+). It functions in the pathway polyol metabolism; myo-inositol degradation into acetyl-CoA; acetyl-CoA from myo-inositol: step 7/7. Its function is as follows. Catalyzes the oxidation of malonate semialdehyde (MSA) and methylmalonate semialdehyde (MMSA) into acetyl-CoA and propanoyl-CoA, respectively. Is involved in a myo-inositol catabolic pathway. Bicarbonate, and not CO2, is the end-product of the enzymatic reaction. This Bacillus thuringiensis (strain Al Hakam) protein is Malonate-semialdehyde dehydrogenase 2.